A 377-amino-acid chain; its full sequence is uncharacterized protein (377 aa).

The N-terminal stretch at 1-23 (MLKFRNFFKLTLLTLASAFFLSG) is a signal peptide. C24 is lipidated: N-palmitoyl cysteine. The S-diacylglycerol cysteine moiety is linked to residue C24.

Its subcellular location is the cell membrane. This is an uncharacterized protein from Mycoplasma genitalium (strain ATCC 33530 / DSM 19775 / NCTC 10195 / G37) (Mycoplasmoides genitalium).